The chain runs to 558 residues: MAKNRRDRNSWGGFSEKTYEWSSEEEEPVKKAGPVQVLVVKDDHSFELDETALNRILLSEAVRDKEVVAVSVAGAFRKGKSFLMDFMLRYMYNQESVDWVGDHNEPLTGFSWRGGSERETTGIQIWSEIFLINKPDGKKVAVLLMDTQGTFDSQSTLRDSATVFALSTMISSIQVYNLSQNVQEDDLQHLQLFTEYGRLAMEETFLKPFQSLIFLVRDWSFPYEFSYGSDGGSKFLEKRLKVSGNQHEELQNVRKHIHSCFTKISCFLLPHPGLKVATNPNFDGKLKEIDDEFIKNLKILIPWLLSPESLDIKEINGNKITCRGLVEYFKAYIKIYQGEELPHPKSMLQATAEANNLAAVATAKDTYNKKMEEICGGDKPFLAPNDLQTKHLELKEESVKLFRGVKKMGGEEFSRRYLQQLETEIDELYIQYIKHNDSKNIFHAARTPATLFVVIFITYVIAGVTGFIGLDIIASLCNMIMGLTLITLCTWAYIRYSGEYRELGAVIDQVAAALWDQGSTNEALYKLYSAAATHRHLYHQAFPAPKSESTEQSEKKKM.

Positions 1–28 (MAKNRRDRNSWGGFSEKTYEWSSEEEEP) are disordered. Positions 1–34 (MAKNRRDRNSWGGFSEKTYEWSSEEEEPVKKAGP) are N-terminal hypervariable region (HVR). Residues 1 to 449 (MAKNRRDRNS…NIFHAARTPA (449 aa)) lie on the Cytoplasmic side of the membrane. Phosphoserine occurs at positions 10, 22, and 23. Positions 64–309 (DKEVVAVSVA…LIPWLLSPES (246 aa)) constitute a GB1/RHD3-type G domain. Residues Arg-77, Lys-78, Gly-79, Lys-80, Ser-81, Phe-82, Gln-148, Arg-217, Asp-218, Val-276, and Asn-279 each contribute to the GDP site. Residues Arg-77, Lys-78, Gly-79, Lys-80, Ser-81, and Phe-82 each coordinate GTP. Ser-81 contacts Mg(2+). Arg-217, Asp-218, and Val-276 together coordinate GTP. The 3HB (three-helix bundle) domain stretch occupies residues 347–438 (MLQATAEANN…YIQYIKHNDS (92 aa)). At Lys-395 the chain carries N6-acetyllysine. The stretch at 418-439 (LQQLETEIDELYIQYIKHNDSK) forms a coiled coil. Positions 439–447 (KNIFHAART) are linker. The helical transmembrane segment at 450-470 (TLFVVIFITYVIAGVTGFIGL) threads the bilayer. Residue Asp-471 is a topological domain, lumenal. The chain crosses the membrane as a helical span at residues 472 to 492 (IIASLCNMIMGLTLITLCTWA). At 493–558 (YIRYSGEYRE…STEQSEKKKM (66 aa)) the chain is on the cytoplasmic side. An autoinhibitory domain region spans residues 521–558 (NEALYKLYSAAATHRHLYHQAFPAPKSESTEQSEKKKM).

The protein belongs to the TRAFAC class dynamin-like GTPase superfamily. GB1/RHD3 GTPase family. GB1 subfamily. In terms of assembly, monomeric and homodimeric. The homodimer, transiently formed by two molecules on opposing membranes, is the active form mediating ER membrane fusion. Interacts with REEP1, REEP5, RTN3 and RTN4 (via the transmembrane region); these proteins are involved in endoplasmic reticulum tubular network organization. Interacts with ZFYVE27; both proteins are involved in endoplasmic reticulum tubular network organization. Interacts with ARL6IP1; both proteins are involved in endoplasmic reticulum tubular network organization. Interacts with SPAST; the interaction is direct, could recruit SPAST to Golgi membranes. Interacts (via N-terminal region) with MAP4K4 (via CNH regulatory domain). May interact with TMED2. Interacts with CPT1C. In terms of processing, phosphorylated. Phosphorylation, by different kinases, of the N-terminal hypervariable region (HVR) regulates the ATL1-mediated membrane tethering step.

Its subcellular location is the endoplasmic reticulum membrane. The protein resides in the golgi apparatus membrane. It localises to the cell projection. The protein localises to the axon. The catalysed reaction is GTP + H2O = GDP + phosphate + H(+). Atlastin-1 (ATL1) is a membrane-anchored GTPase that mediates the GTP-dependent fusion of endoplasmic reticulum (ER) membranes, maintaining the continuous ER network. It facilitates the formation of three-way junctions where ER tubules intersect. Two atlastin-1 on neighboring ER tubules bind GTP and form loose homodimers through the GB1/RHD3-type G domains and 3HB regions. Upon GTP hydrolysis, the 3HB regions tighten, pulling the membranes together to drive their fusion. After fusion, the homodimer disassembles upon release of inorganic phosphate (Pi). Subsequently, GDP dissociates, resetting the monomers to a conformation ready for a new fusion cycle. May also regulate more or less directly Golgi biogenesis. Indirectly regulates axonal development. This is Atlastin-1 from Bos taurus (Bovine).